The following is a 945-amino-acid chain: Nonsense-mediated mRNA decay factor SMG8 (945 aa).

2 disordered regions span residues 563–604 (RAEP…SANE) and 633–671 (AEAEVEEAEVCDKGSQDNSTSSDTSTESEIELQPKERSA).

Belongs to the SMG8 family.

Its function is as follows. Involved in nonsense-mediated decay (NMD) of mRNAs containing premature stop codons. Probable component of kinase complex containing nonC and recruited to stalled ribosomes. This chain is Nonsense-mediated mRNA decay factor SMG8, found in Drosophila grimshawi (Hawaiian fruit fly).